A 468-amino-acid chain; its full sequence is MKTHFNFDTVVIGSGPGGEGAAMGLAKKGQSVAVVERYKNVGGGCTHSGTIPSKALRHVISRIIEFNQNPLYSEHLQSIHPSFYHILQHANHVIRKQVSMRFDFYQRNHCHLFFGHARFIDPYKLEVIRPDGTLNTLSADHIVIATGSRPYHPESIDFTHPRIYDSDSILELKEEQQPKHIIIYGAGVIGCEYASIFRGLGVKVDLINTRNHLLAFLDQEISDALSYHFWNNGVVIRHNEEFDLIEGLDQGVVVHLKSGKKVKADCLFYANGRTGNTKELLLENIGLRTDERRFLQVSNLYQTALSHIYAVGDVIGYPSLASAAYDQGRIASQAITQGINSVRLIENIPTGIYTIPEISSVGKTEQELTDLKVPYEVGRAQFKHLARAQIAGMEAGSLKILFHRESKEILGIHCFGERAAEIIHIGQAIMEQKNGGNTIDYFVNTTFNYPTMAEAYRVAALNGLNRLF.

36–45 (ERYKNVGGGC) is an FAD binding site.

It belongs to the class-I pyridine nucleotide-disulfide oxidoreductase family. Requires FAD as cofactor.

Its subcellular location is the cytoplasm. It catalyses the reaction NAD(+) + NADPH = NADH + NADP(+). Conversion of NADPH, generated by peripheral catabolic pathways, to NADH, which can enter the respiratory chain for energy generation. The polypeptide is Soluble pyridine nucleotide transhydrogenase (Hamiltonella defensa subsp. Acyrthosiphon pisum (strain 5AT)).